The sequence spans 267 residues: Regulatory protein RecX (267 aa).

Belongs to the RecX family.

The protein localises to the cytoplasm. Modulates RecA activity. In Staphylococcus haemolyticus (strain JCSC1435), this protein is Regulatory protein RecX.